The sequence spans 354 residues: Coiled-coil domain-containing protein 86 (354 aa).

The segment at 1–354 is disordered; that stretch reads MDTPLRRSRR…QPPQRPATKV (354 aa). Phosphoserine is present on residues S18 and S24. Residues 31–44 show a composition bias toward basic and acidic residues; sequence VLVEFESNPKETGE. S47 and S53 each carry phosphoserine. Low complexity predominate over residues 49 to 58; sequence PGLGSPSRQP. A Phosphothreonine modification is found at T60. Phosphoserine occurs at positions 61, 64, 75, 86, 105, 108, 123, and 183. The span at 97-107 shows a compositional bias: polar residues; the sequence is FPQNQPESSPE. Residues 199–211 are compositionally biased toward basic and acidic residues; that stretch reads PAREGPAPKKREG. S212 and S213 each carry phosphoserine. Basic residues predominate over residues 232–248; the sequence is GKPKSGRVWKDRSKKRF. Composition is skewed to basic and acidic residues over residues 267–289 and 297–311; these read DRQE…ERRR and AENL…RKAE. Residues 274 to 317 adopt a coiled-coil conformation; the sequence is AKDFARHLEEEKERRRQEKKKRRAENLRRRLENERKAEIVQVIR. A compositionally biased stretch (basic residues) spans 320-330; sequence AKLKRAKKKQL. R336 is modified (citrulline).

Citrullinated by PADI4.

The protein localises to the nucleus. Its subcellular location is the chromosome. It is found in the nucleolus. Required for proper chromosome segregation during mitosis and error-free mitotic progression. The chain is Coiled-coil domain-containing protein 86 from Bos taurus (Bovine).